Here is a 91-residue protein sequence, read N- to C-terminus: Elongation factor 1-beta (91 aa).

Belongs to the EF-1-beta/EF-1-delta family.

Its function is as follows. Promotes the exchange of GDP for GTP in EF-1-alpha/GDP, thus allowing the regeneration of EF-1-alpha/GTP that could then be used to form the ternary complex EF-1-alpha/GTP/AAtRNA. The polypeptide is Elongation factor 1-beta (Thermococcus gammatolerans (strain DSM 15229 / JCM 11827 / EJ3)).